A 441-amino-acid polypeptide reads, in one-letter code: Dihydroorotase (441 aa).

Zn(2+) is bound by residues H77 and H79. Substrate contacts are provided by residues 79 to 81 and N111; that span reads HFR. Zn(2+) contacts are provided by D167, H194, and H248. N294 contributes to the substrate binding site. D321 lines the Zn(2+) pocket. D321 is an active-site residue. Residues H325 and 339-340 each bind substrate; that span reads FG.

The protein belongs to the metallo-dependent hydrolases superfamily. DHOase family. Class I DHOase subfamily. The cofactor is Zn(2+).

The enzyme catalyses (S)-dihydroorotate + H2O = N-carbamoyl-L-aspartate + H(+). It participates in pyrimidine metabolism; UMP biosynthesis via de novo pathway; (S)-dihydroorotate from bicarbonate: step 3/3. Its function is as follows. Catalyzes the reversible cyclization of carbamoyl aspartate to dihydroorotate. This Wolbachia sp. subsp. Drosophila simulans (strain wRi) protein is Dihydroorotase.